The sequence spans 873 residues: Probable beta-glucosidase A (873 aa).

The signal sequence occupies residues 1–19 (MRFGWLEVAALTAASVANA). Asparagine 71, asparagine 222, and asparagine 263 each carry an N-linked (GlcNAc...) asparagine glycan. The active site involves aspartate 291. 9 N-linked (GlcNAc...) asparagine glycosylation sites follow: asparagine 326, asparagine 333, asparagine 365, asparagine 453, asparagine 534, asparagine 553, asparagine 575, asparagine 679, and asparagine 725. The interval 731–764 (DSSDDPNYGWEDSEYIPEGARDGSPQPLLKAGGA) is disordered.

Belongs to the glycosyl hydrolase 3 family.

The protein localises to the secreted. The catalysed reaction is Hydrolysis of terminal, non-reducing beta-D-glucosyl residues with release of beta-D-glucose.. Its pathway is glycan metabolism; cellulose degradation. Its function is as follows. Beta-glucosidases are one of a number of cellulolytic enzymes involved in the degradation of cellulosic biomass. Catalyzes the last step releasing glucose from the inhibitory cellobiose. The sequence is that of Probable beta-glucosidase A (bglA) from Aspergillus fumigatus (strain CBS 144.89 / FGSC A1163 / CEA10) (Neosartorya fumigata).